Reading from the N-terminus, the 100-residue chain is MISLSYSLSLAAILFMLGLTGIMIRRNLLFLLLGLEIMINAAALAFVIVGQYWGQADGQVMYILTVTIAATEASIGLALLLHLYRYYQTLDIDLISEMHR.

Transmembrane regions (helical) follow at residues 4-24, 29-49, and 60-80; these read LSYS…GIMI, LFLL…FVIV, and VMYI…LALL.

The protein belongs to the complex I subunit 4L family. In terms of assembly, NDH-1 is composed of 14 different subunits. Subunits NuoA, H, J, K, L, M, N constitute the membrane sector of the complex.

It is found in the cell membrane. The catalysed reaction is a quinone + NADH + 5 H(+)(in) = a quinol + NAD(+) + 4 H(+)(out). Functionally, NDH-1 shuttles electrons from NADH, via FMN and iron-sulfur (Fe-S) centers, to quinones in the respiratory chain. The immediate electron acceptor for the enzyme in this species is believed to be ubiquinone. Couples the redox reaction to proton translocation (for every two electrons transferred, four hydrogen ions are translocated across the cytoplasmic membrane), and thus conserves the redox energy in a proton gradient. This Baumannia cicadellinicola subsp. Homalodisca coagulata protein is NADH-quinone oxidoreductase subunit K.